The sequence spans 361 residues: Peptide chain release factor 1 (361 aa).

Q236 carries the post-translational modification N5-methylglutamine. The span at 285 to 309 (NAKDSARAADRKAQVGSGDRSERIR) shows a compositional bias: basic and acidic residues. The tract at residues 285-312 (NAKDSARAADRKAQVGSGDRSERIRTYN) is disordered.

The protein belongs to the prokaryotic/mitochondrial release factor family. In terms of processing, methylated by PrmC. Methylation increases the termination efficiency of RF1.

It is found in the cytoplasm. Peptide chain release factor 1 directs the termination of translation in response to the peptide chain termination codons UAG and UAA. This is Peptide chain release factor 1 from Methylobacterium radiotolerans (strain ATCC 27329 / DSM 1819 / JCM 2831 / NBRC 15690 / NCIMB 10815 / 0-1).